The primary structure comprises 84 residues: Large ribosomal subunit protein bL27 (84 aa).

Residues 1 to 25 are disordered; the sequence is MAHKKGQGSTQNNRDSAGRRLGVKK.

Belongs to the bacterial ribosomal protein bL27 family.

In Sulfurovum sp. (strain NBC37-1), this protein is Large ribosomal subunit protein bL27.